A 236-amino-acid chain; its full sequence is Probable metal transport system ATP-binding protein TC_0697 (236 aa).

In terms of domain architecture, ABC transporter spans 5–236 (LILENVSFRY…FCCNTFGKCS (232 aa)). An ATP-binding site is contributed by 39 to 46 (GPNGGGKT).

The protein belongs to the ABC transporter superfamily.

It is found in the cell inner membrane. Part of an ATP-driven transport system TC_0696/TC_0697/TC_0698 for a metal. Probably responsible for energy coupling to the transport system. This chain is Probable metal transport system ATP-binding protein TC_0697, found in Chlamydia muridarum (strain MoPn / Nigg).